A 357-amino-acid chain; its full sequence is UPF0283 membrane protein HSM_0945 (357 aa).

A run of 3 helical transmembrane segments spans residues 67–87, 96–116, and 213–233; these read LMATICLFSCGILAQSVQWLV, IAFVFAMVSLFLVLLGLGTII, and AVESALIVAVSPLAIVDMFFI.

The protein belongs to the UPF0283 family.

It localises to the cell inner membrane. The chain is UPF0283 membrane protein HSM_0945 from Histophilus somni (strain 2336) (Haemophilus somnus).